We begin with the raw amino-acid sequence, 206 residues long: Guanylate kinase (206 aa).

Residues G3–T183 enclose the Guanylate kinase-like domain. A10–S17 is a binding site for ATP.

It belongs to the guanylate kinase family.

It localises to the cytoplasm. It carries out the reaction GMP + ATP = GDP + ADP. Functionally, essential for recycling GMP and indirectly, cGMP. In Haemophilus ducreyi (strain 35000HP / ATCC 700724), this protein is Guanylate kinase.